Consider the following 1167-residue polypeptide: ATP-dependent helicase/deoxyribonuclease subunit B (1167 aa).

Residues 1 to 359 (MSLRFLLGRS…IRQTEAYRDL (359 aa)) enclose the UvrD-like helicase ATP-binding domain. ATP is bound at residue 8–15 (GRSGSGKT). Residues 282-588 (VNRRHQDKAL…EFALVPPAID (307 aa)) form the UvrD-like helicase C-terminal domain. Cys803, Cys1125, Cys1128, and Cys1134 together coordinate [4Fe-4S] cluster.

The protein belongs to the helicase family. AddB/RexB type 1 subfamily. In terms of assembly, heterodimer of AddA and AddB. It depends on Mg(2+) as a cofactor. Requires [4Fe-4S] cluster as cofactor.

Its function is as follows. The heterodimer acts as both an ATP-dependent DNA helicase and an ATP-dependent, dual-direction single-stranded exonuclease. Recognizes the chi site generating a DNA molecule suitable for the initiation of homologous recombination. The AddB subunit has 5' -&gt; 3' nuclease activity but not helicase activity. This is ATP-dependent helicase/deoxyribonuclease subunit B from Geobacillus thermodenitrificans (strain NG80-2).